A 353-amino-acid polypeptide reads, in one-letter code: Mitochondrial glutathione transporter SLC25A40 (353 aa).

Solcar repeat units lie at residues 14–132 (ITPF…LFAL), 140–224 (RSDL…GKWW), and 234–328 (PTVA…GKAF). A run of 6 helical transmembrane segments spans residues 20-40 (MMASCSGAIITSLLVTPLDVV), 104-124 (LWSGLPPTLIMAVPATVIYFT), 143-163 (LAPLFAGAIARVGSATVISPL), 200-221 (WGPTLLRDVPFSAMYWFNYEKG), 237-257 (AITFTAGALSGSIASIITLPF), and 299-319 (GLFAGFMPRLIKVAPACAIMI).

It belongs to the mitochondrial carrier (TC 2.A.29) family.

It localises to the mitochondrion inner membrane. It carries out the reaction glutathione(in) = glutathione(out). Functionally, probable mitochondrial transporter required for glutathione import into mitochondria. Glutathione, which plays key roles in oxidative metabolism, is produced exclusively in the cytosol and is imported in many organelles. Mitochondrial glutathione is required for the activity and stability of proteins containing iron-sulfur clusters. In Danio rerio (Zebrafish), this protein is Mitochondrial glutathione transporter SLC25A40.